Consider the following 132-residue polypeptide: Small ribosomal subunit protein uS8 (132 aa).

The protein belongs to the universal ribosomal protein uS8 family. As to quaternary structure, part of the 30S ribosomal subunit. Contacts proteins S5 and S12.

Its function is as follows. One of the primary rRNA binding proteins, it binds directly to 16S rRNA central domain where it helps coordinate assembly of the platform of the 30S subunit. In Mycolicibacterium smegmatis (strain ATCC 700084 / mc(2)155) (Mycobacterium smegmatis), this protein is Small ribosomal subunit protein uS8.